Reading from the N-terminus, the 532-residue chain is MQTPSSASAESEKDSGNTYVGPWLLGRTLGQGNLAKVKLGKHFQTNEKVALKMVYNDELEDKDTWKRLQREVTILRQLHHPNIITLYQVFRVPKYTVLALEYMDTDLHSMVVKHNRLDECTTRKIFRQIVHAIDYCHLHRVAHRDLKLENILLNKDLVVKLTDFGLSNFMLDGSFLSTSCGTPHYAAPEVIQGRYYDGCDVDVWGCGILLYLMLVGEFPFEDVTISNVLSRVCKGIYTIPSFVSSSASDLIRQMLMVLPTSRIKVAEIMQHPWFIADLPTHSRLPSRTSSFSSKHRSVTFSPPDLAILFDPSITSPSSSVGQIPQPTDHSALSPSKPMSISGTESPNPDPASLCYSSYEDLYSATSWHSDMAESSGFLDPTDIPPIPSNVETLRSSLPQRHASFMNKVYNHPLSRPPAPNRLRSLRWHYGIQTAKNPIEVLRKLCEALLELGARFRPCDEESFLKENKYKVFSCITCHNSPVYLVIELFSIGPSASVIDIRFSSSDDSIKYTSSYSPMPFLEVVKQLILKIA.

In terms of domain architecture, Protein kinase spans 23-274; sequence WLLGRTLGQG…VAEIMQHPWF (252 aa). ATP contacts are provided by residues 29–37 and K52; that span reads LGQGNLAKV. D145 serves as the catalytic Proton acceptor. The segment covering 316–346 has biased composition (polar residues); the sequence is PSSSVGQIPQPTDHSALSPSKPMSISGTESP. Residues 316–349 are disordered; sequence PSSSVGQIPQPTDHSALSPSKPMSISGTESPNPD.

The protein localises to the cytoplasm. The protein resides in the nucleus. Its subcellular location is the cytoskeleton. It localises to the microtubule organizing center. It is found in the spindle pole body. This chain is Protein kinase domain-containing protein ppk9 (ppk9), found in Schizosaccharomyces pombe (strain 972 / ATCC 24843) (Fission yeast).